The primary structure comprises 505 residues: Deoxyguanosinetriphosphate triphosphohydrolase (505 aa).

In terms of domain architecture, HD spans 66-273; that stretch reads RLTHSMEVQQ…MEAADDISYC (208 aa).

The protein belongs to the dGTPase family. Type 1 subfamily. In terms of assembly, homotetramer. Mg(2+) is required as a cofactor.

The enzyme catalyses dGTP + H2O = 2'-deoxyguanosine + triphosphate + H(+). In terms of biological role, dGTPase preferentially hydrolyzes dGTP over the other canonical NTPs. The protein is Deoxyguanosinetriphosphate triphosphohydrolase of Escherichia fergusonii (strain ATCC 35469 / DSM 13698 / CCUG 18766 / IAM 14443 / JCM 21226 / LMG 7866 / NBRC 102419 / NCTC 12128 / CDC 0568-73).